We begin with the raw amino-acid sequence, 228 residues long: Ribose-5-phosphate isomerase A (228 aa).

Residues 27-30 (TGTT), 86-89 (DGAD), and 100-103 (KGMG) each bind substrate. The active-site Proton acceptor is the Glu-109. Lys-127 contacts substrate.

This sequence belongs to the ribose 5-phosphate isomerase family. Homodimer.

It carries out the reaction aldehydo-D-ribose 5-phosphate = D-ribulose 5-phosphate. The protein operates within carbohydrate degradation; pentose phosphate pathway; D-ribose 5-phosphate from D-ribulose 5-phosphate (non-oxidative stage): step 1/1. In terms of biological role, catalyzes the reversible conversion of ribose-5-phosphate to ribulose 5-phosphate. The protein is Ribose-5-phosphate isomerase A of Borreliella afzelii (strain PKo) (Borrelia afzelii).